The primary structure comprises 130 residues: Small ribosomal subunit protein uS9 (130 aa).

It belongs to the universal ribosomal protein uS9 family.

The polypeptide is Small ribosomal subunit protein uS9 (Mycoplasmoides gallisepticum (strain R(low / passage 15 / clone 2)) (Mycoplasma gallisepticum)).